A 105-amino-acid chain; its full sequence is Large ribosomal subunit protein uL23 (105 aa).

This sequence belongs to the universal ribosomal protein uL23 family. In terms of assembly, part of the 50S ribosomal subunit. Contacts protein L29, and trigger factor when it is bound to the ribosome.

Functionally, one of the early assembly proteins it binds 23S rRNA. One of the proteins that surrounds the polypeptide exit tunnel on the outside of the ribosome. Forms the main docking site for trigger factor binding to the ribosome. This Ureaplasma urealyticum serovar 10 (strain ATCC 33699 / Western) protein is Large ribosomal subunit protein uL23.